The following is a 164-amino-acid chain: Lipoprotein signal peptidase (164 aa).

3 helical membrane-spanning segments follow: residues 12-32 (WLWL…LILQ), 70-90 (WFFA…MYRS), and 102-122 (ALII…GFVV). Catalysis depends on residues D123 and D141. The helical transmembrane segment at 137–157 (FNLADTAICVGAALIVLEGFL) threads the bilayer.

This sequence belongs to the peptidase A8 family.

The protein localises to the cell inner membrane. The enzyme catalyses Release of signal peptides from bacterial membrane prolipoproteins. Hydrolyzes -Xaa-Yaa-Zaa-|-(S,diacylglyceryl)Cys-, in which Xaa is hydrophobic (preferably Leu), and Yaa (Ala or Ser) and Zaa (Gly or Ala) have small, neutral side chains.. Its pathway is protein modification; lipoprotein biosynthesis (signal peptide cleavage). This protein specifically catalyzes the removal of signal peptides from prolipoproteins. This chain is Lipoprotein signal peptidase, found in Escherichia coli O9:H4 (strain HS).